Consider the following 795-residue polypeptide: Phenylalanine--tRNA ligase beta subunit (795 aa).

The 110-residue stretch at A39 to R148 folds into the tRNA-binding domain. The B5 domain maps to P401–N476. 4 residues coordinate Mg(2+): D454, D460, E463, and E464. Residues S701–R794 form the FDX-ACB domain.

The protein belongs to the phenylalanyl-tRNA synthetase beta subunit family. Type 1 subfamily. Tetramer of two alpha and two beta subunits. Requires Mg(2+) as cofactor.

The protein resides in the cytoplasm. It carries out the reaction tRNA(Phe) + L-phenylalanine + ATP = L-phenylalanyl-tRNA(Phe) + AMP + diphosphate + H(+). The polypeptide is Phenylalanine--tRNA ligase beta subunit (Aliivibrio fischeri (strain ATCC 700601 / ES114) (Vibrio fischeri)).